Consider the following 556-residue polypeptide: Formate--tetrahydrofolate ligase (556 aa).

65–72 provides a ligand contact to ATP; sequence TPAGEGKS.

It belongs to the formate--tetrahydrofolate ligase family.

The catalysed reaction is (6S)-5,6,7,8-tetrahydrofolate + formate + ATP = (6R)-10-formyltetrahydrofolate + ADP + phosphate. It functions in the pathway one-carbon metabolism; tetrahydrofolate interconversion. The sequence is that of Formate--tetrahydrofolate ligase from Clostridium perfringens (strain 13 / Type A).